A 273-amino-acid chain; its full sequence is Large ribosomal subunit protein uL2 (273 aa).

Disordered regions lie at residues 28–53 (KPFA…TTRH) and 221–273 (RGTA…RRSK). The span at 39–48 (KSGGRNNNGR) shows a compositional bias: low complexity.

Belongs to the universal ribosomal protein uL2 family. Part of the 50S ribosomal subunit. Forms a bridge to the 30S subunit in the 70S ribosome.

Functionally, one of the primary rRNA binding proteins. Required for association of the 30S and 50S subunits to form the 70S ribosome, for tRNA binding and peptide bond formation. It has been suggested to have peptidyltransferase activity; this is somewhat controversial. Makes several contacts with the 16S rRNA in the 70S ribosome. The sequence is that of Large ribosomal subunit protein uL2 from Klebsiella pneumoniae (strain 342).